Reading from the N-terminus, the 629-residue chain is Aspartate--tRNA(Asp/Asn) ligase (629 aa).

Residues 1–24 are disordered; that stretch reads MERSSRADLISEDSHPARTHTCGD. Basic and acidic residues predominate over residues 12 to 24; it reads EDSHPARTHTCGD. E194 lines the L-aspartate pocket. An aspartate region spans residues 218–221; it reads QTYK. L-aspartate is bound at residue R240. Residues 240-242 and Q249 each bind ATP; that span reads RDE. Residue H474 participates in L-aspartate binding. Residue E508 participates in ATP binding. R515 contacts L-aspartate. 560 to 563 serves as a coordination point for ATP; sequence GLDR.

It belongs to the class-II aminoacyl-tRNA synthetase family. Type 1 subfamily. As to quaternary structure, homodimer.

The protein resides in the cytoplasm. It catalyses the reaction tRNA(Asx) + L-aspartate + ATP = L-aspartyl-tRNA(Asx) + AMP + diphosphate. Functionally, aspartyl-tRNA synthetase with relaxed tRNA specificity since it is able to aspartylate not only its cognate tRNA(Asp) but also tRNA(Asn). Reaction proceeds in two steps: L-aspartate is first activated by ATP to form Asp-AMP and then transferred to the acceptor end of tRNA(Asp/Asn). The protein is Aspartate--tRNA(Asp/Asn) ligase of Salinibacter ruber (strain DSM 13855 / M31).